We begin with the raw amino-acid sequence, 404 residues long: uncharacterized protein (404 aa).

Helical transmembrane passes span 3-23 (IIAK…PITE), 43-63 (TTQI…LTLG), 73-93 (PVVL…IFAP), 95-115 (IETL…GSVI), 135-155 (SLSP…GYII), 162-182 (YTFV…CKIL), 216-236 (IIGA…FIFI), 248-268 (KLAF…GYLI), 280-300 (ILGL…ALIL), 309-329 (IAVI…NLLI), 346-366 (TAGS…TFLV), and 377-397 (FALL…YILI).

It belongs to the major facilitator superfamily. Bcr/CmlA family.

The protein resides in the cell inner membrane. This is an uncharacterized protein from Rickettsia bellii (strain RML369-C).